Consider the following 199-residue polypeptide: MACNIPNQRQRTLSTTGEALYEILGLHKGASNEEIKKTYRKLALKHHPDKNPDDPAATEKFKEINNAHAILTDISKRSIYDKYGSLGLYVAEQFGDENVNTYFMLSSWWAKALFVIVGLLTGCYFCCCLCCCCNCCCGHCRPESSVPEEDFYVSPEDLEEQIKSDMEKDVDFPVFLQPTNANEKTQLIKEGSRSYCTDS.

Residue S14 is modified to Phosphoserine. Residues 19–84 (ALYEILGLHK…SKRSIYDKYG (66 aa)) enclose the J domain.

As to quaternary structure, interacts with the chaperone complex consisting of HSC70 and SGTA. In terms of processing, palmitoylated. Palmitoylation is not required for membrane association. In terms of tissue distribution, testis specific.

Its subcellular location is the membrane. The chain is DnaJ homolog subfamily C member 5B (DNAJC5B) from Homo sapiens (Human).